A 613-amino-acid polypeptide reads, in one-letter code: Arginine--tRNA ligase (613 aa).

The 'HIGH' region signature appears at 123-133 (PNVAKPMHVGH).

Belongs to the class-I aminoacyl-tRNA synthetase family. Monomer.

It localises to the cytoplasm. The enzyme catalyses tRNA(Arg) + L-arginine + ATP = L-arginyl-tRNA(Arg) + AMP + diphosphate. The polypeptide is Arginine--tRNA ligase (Caulobacter sp. (strain K31)).